The chain runs to 117 residues: Ig heavy chain V region MOPC 104E (117 aa).

One can recognise an Ig-like domain in the interval 1-116 (EVQLQQSGPE…WGAGTTVTVS (116 aa)). A disulfide bond links Cys-22 and Cys-96. Asn-55 is a glycosylation site (N-linked (GlcNAc...) (high mannose) asparagine; atypical).

In Mus musculus (Mouse), this protein is Ig heavy chain V region MOPC 104E.